Reading from the N-terminus, the 114-residue chain is Protein Tat (114 aa).

An interaction with human CREBBP region spans residues 1-24 (MDPVDPEVPPWHHPGSQPQIPCNN). Residues 1 to 48 (MDPVDPEVPPWHHPGSQPQIPCNNCYCKRCCYHCYVCFVRKGLGISYG) are transactivation. The Zn(2+) site is built by Cys-22, Cys-25, and Cys-27. Positions 22 to 37 (CNNCYCKRCCYHCYVC) are cysteine-rich. Lys-28 carries the post-translational modification N6-acetyllysine; by host PCAF. 4 residues coordinate Zn(2+): Cys-30, His-33, Cys-34, and Cys-37. The interval 38–48 (FVRKGLGISYG) is core. The tract at residues 48 to 114 (GRKKRGRPAA…CHCCTRTSEQ (67 aa)) is disordered. Positions 49–56 (RKKRGRPA) match the Nuclear localization signal, RNA-binding (TAR), and protein transduction motif. The segment at 49–84 (RKKRGRPAAASHPDHKDPVPKQSPTITKRKQERQEE) is interaction with the host capping enzyme RNGTT. An N6-acetyllysine; by host EP300 and GCN5L2 mark is found at Lys-50 and Lys-51. Arg-52 is modified (asymmetric dimethylarginine; by host PRMT6). A Glycyl lysine isopeptide (Lys-Gly) (interchain with G-Cter in ubiquitin) cross-link involves residue Lys-69.

This sequence belongs to the lentiviruses Tat family. In terms of assembly, interacts with host CCNT1. Associates with the P-TEFb complex composed at least of Tat, P-TEFb (CDK9 and CCNT1), TAR RNA, RNA Pol II. Recruits the HATs CREBBP, TAF1/TFIID, EP300, PCAF and GCN5L2. Interacts with host KAT5/Tip60; this interaction targets the latter to degradation. Interacts with the host deacetylase SIRT1. Interacts with host capping enzyme RNGTT; this interaction stimulates RNGTT. Binds to host KDR, and to the host integrins ITGAV/ITGB3 and ITGA5/ITGB1. Interacts with host KPNB1/importin beta-1 without previous binding to KPNA1/importin alpha-1. Interacts with EIF2AK2. Interacts with host nucleosome assembly protein NAP1L1; this interaction may be required for the transport of Tat within the nucleus, since the two proteins interact at the nuclear rim. Interacts with host C1QBP/SF2P32; this interaction involves lysine-acetylated Tat. Interacts with the host chemokine receptors CCR2, CCR3 and CXCR4. Interacts with host DPP4/CD26; this interaction may trigger an anti-proliferative effect. Interacts with host LDLR. Interacts with the host extracellular matrix metalloproteinase MMP1. Interacts with host PRMT6; this interaction mediates Tat's methylation. Interacts with, and is ubiquitinated by MDM2/Hdm2. Interacts with host PSMC3 and HTATIP2. Interacts with STAB1; this interaction may overcome SATB1-mediated repression of IL2 and IL2RA (interleukin) in T cells by binding to the same domain than HDAC1. Interacts (when acetylated) with human CDK13, thereby increasing HIV-1 mRNA splicing and promoting the production of the doubly spliced HIV-1 protein Nef. Interacts with host TBP; this interaction modulates the activity of transcriptional pre-initiation complex. Interacts with host RELA. Interacts with host PLSCR1; this interaction negatively regulates Tat transactivation activity by altering its subcellular distribution. Asymmetrical arginine methylation by host PRMT6 seems to diminish the transactivation capacity of Tat and affects the interaction with host CCNT1. In terms of processing, acetylation by EP300, CREBBP, GCN5L2/GCN5 and PCAF regulates the transactivation activity of Tat. EP300-mediated acetylation of Lys-50 promotes dissociation of Tat from the TAR RNA through the competitive binding to PCAF's bromodomain. In addition, the non-acetylated Tat's N-terminus can also interact with PCAF. PCAF-mediated acetylation of Lys-28 enhances Tat's binding to CCNT1. Lys-50 is deacetylated by SIRT1. Post-translationally, polyubiquitination by host MDM2 does not target Tat to degradation, but activates its transactivation function and fosters interaction with CCNT1 and TAR RNA. Phosphorylated by EIF2AK2 on serine and threonine residues adjacent to the basic region important for TAR RNA binding and function. Phosphorylation of Tat by EIF2AK2 is dependent on the prior activation of EIF2AK2 by dsRNA.

It localises to the host nucleus. The protein resides in the host nucleolus. The protein localises to the host cytoplasm. Its subcellular location is the secreted. Functionally, transcriptional activator that increases RNA Pol II processivity, thereby increasing the level of full-length viral transcripts. Recognizes a hairpin structure at the 5'-LTR of the nascent viral mRNAs referred to as the transactivation responsive RNA element (TAR) and recruits the cyclin T1-CDK9 complex (P-TEFb complex) that will in turn hyperphosphorylate the RNA polymerase II to allow efficient elongation. The CDK9 component of P-TEFb and other Tat-activated kinases hyperphosphorylate the C-terminus of RNA Pol II that becomes stabilized and much more processive. Other factors such as HTATSF1/Tat-SF1, SUPT5H/SPT5, and HTATIP2 are also important for Tat's function. Besides its effect on RNA Pol II processivity, Tat induces chromatin remodeling of proviral genes by recruiting the histone acetyltransferases (HATs) CREBBP, EP300 and PCAF to the chromatin. This also contributes to the increase in proviral transcription rate, especially when the provirus integrates in transcriptionally silent region of the host genome. To ensure maximal activation of the LTR, Tat mediates nuclear translocation of NF-kappa-B by interacting with host RELA. Through its interaction with host TBP, Tat may also modulate transcription initiation. Tat can reactivate a latently infected cell by penetrating in it and transactivating its LTR promoter. In the cytoplasm, Tat is thought to act as a translational activator of HIV-1 mRNAs. Extracellular circulating Tat can be endocytosed by surrounding uninfected cells via the binding to several surface receptors such as CD26, CXCR4, heparan sulfate proteoglycans (HSPG) or LDLR. Neurons are rarely infected, but they internalize Tat via their LDLR. Through its interaction with nuclear HATs, Tat is potentially able to control the acetylation-dependent cellular gene expression. Modulates the expression of many cellular genes involved in cell survival, proliferation or in coding for cytokines or cytokine receptors. Tat plays a role in T-cell and neurons apoptosis. Tat induced neurotoxicity and apoptosis probably contribute to neuroAIDS. Circulating Tat also acts as a chemokine-like and/or growth factor-like molecule that binds to specific receptors on the surface of the cells, affecting many cellular pathways. In the vascular system, Tat binds to ITGAV/ITGB3 and ITGA5/ITGB1 integrins dimers at the surface of endothelial cells and competes with bFGF for heparin-binding sites, leading to an excess of soluble bFGF. This Homo sapiens (Human) protein is Protein Tat.